A 775-amino-acid chain; its full sequence is Glycerol-3-phosphate acyltransferase (775 aa).

The HXXXXD motif signature appears at 268–273; it reads HRSYID.

The protein belongs to the GPAT/DAPAT family.

It is found in the cell membrane. The catalysed reaction is sn-glycerol 3-phosphate + an acyl-CoA = a 1-acyl-sn-glycero-3-phosphate + CoA. It functions in the pathway phospholipid metabolism; CDP-diacylglycerol biosynthesis; CDP-diacylglycerol from sn-glycerol 3-phosphate: step 1/3. The sequence is that of Glycerol-3-phosphate acyltransferase (plsB) from Mycobacterium leprae (strain TN).